The sequence spans 432 residues: Nuclear pore complex-interacting protein family member B8 (432 aa).

Disordered regions lie at residues 260–280 (RMGRQPPPPTQQHSITDNSLS) and 353–420 (SPLP…LRTR). Over residues 270 to 280 (QQHSITDNSLS) the composition is skewed to polar residues. Residues 374–402 (EVEKPPKPKRWRVDEVEQSPKPKRQREAE) are compositionally biased toward basic and acidic residues. Residues 408-420 (KPKRRRLSKLRTR) are compositionally biased toward basic residues.

This sequence belongs to the NPIP family.

The polypeptide is Nuclear pore complex-interacting protein family member B8 (NPIPB8) (Homo sapiens (Human)).